The primary structure comprises 615 residues: Chaperone protein DnaK (615 aa).

Position 195 is a phosphothreonine; by autocatalysis (T195). Positions 592 to 615 are disordered; it reads EKGAQAASGKGPDDVIDADYKPAD.

This sequence belongs to the heat shock protein 70 family.

Acts as a chaperone. In Thermus thermophilus (strain ATCC BAA-163 / DSM 7039 / HB27), this protein is Chaperone protein DnaK.